Reading from the N-terminus, the 363-residue chain is GDP-fucose transporter (363 aa).

8 consecutive transmembrane segments (helical) span residues 30-47 (VITA…LVFL), 62-79 (FITW…LFLS), 126-148 (VSFY…YLIL), 152-171 (TSGQ…LLGV), 180-202 (LSYT…AIYT), 222-244 (LNAL…VFYF), 251-273 (TFWI…TGWQ), and 307-326 (LLWW…YTYV). Residues 334–363 (KNSGASPASEAKSDKVKLLGRDGNAAEESV) form a disordered region. Residues 344-353 (AKSDKVKLLG) show a composition bias toward basic and acidic residues.

Belongs to the TPT transporter family. SLC35C subfamily.

Its subcellular location is the golgi apparatus membrane. In terms of biological role, involved in GDP-fucose import from the cytoplasm into the Golgi lumen. The polypeptide is GDP-fucose transporter (Caenorhabditis elegans).